Consider the following 397-residue polypeptide: 4-hydroxyphenylpyruvate dioxygenase (397 aa).

2 VOC domains span residues 18–149 (NFHH…FVEY) and 181–339 (FIDH…IFTK). Fe cation-binding residues include His-184, His-267, and Glu-350.

This sequence belongs to the 4HPPD family. In terms of assembly, homodimer. The cofactor is Fe cation.

Its subcellular location is the cytoplasm. It is found in the endoplasmic reticulum membrane. The protein resides in the golgi apparatus membrane. It catalyses the reaction 3-(4-hydroxyphenyl)pyruvate + O2 = homogentisate + CO2. It participates in amino-acid degradation; L-phenylalanine degradation; acetoacetate and fumarate from L-phenylalanine: step 3/6. Its function is as follows. Catalyzes the conversion of 4-hydroxyphenylpyruvic acid to homogentisic acid, one of the steps in tyrosine catabolism. In Danio rerio (Zebrafish), this protein is 4-hydroxyphenylpyruvate dioxygenase (hpd).